The following is a 219-amino-acid chain: ATP-dependent Clp protease proteolytic subunit 1, mitochondrial (219 aa).

Residues 1-23 (MLRRILTTSSVRNLTSSTQARVG) constitute a mitochondrion transit peptide. The active-site Nucleophile is serine 118. The active site involves histidine 143.

This sequence belongs to the peptidase S14 family. Tetradecamer that assembles into a two heptameric rings with a central cavity.

It localises to the mitochondrion matrix. The catalysed reaction is Hydrolysis of proteins to small peptides in the presence of ATP and magnesium. alpha-casein is the usual test substrate. In the absence of ATP, only oligopeptides shorter than five residues are hydrolyzed (such as succinyl-Leu-Tyr-|-NHMec, and Leu-Tyr-Leu-|-Tyr-Trp, in which cleavage of the -Tyr-|-Leu- and -Tyr-|-Trp bonds also occurs).. In terms of biological role, clp cleaves peptides in various proteins in a process that requires ATP hydrolysis. Clp may be responsible for a fairly general and central housekeeping function rather than for the degradation of specific substrates. This chain is ATP-dependent Clp protease proteolytic subunit 1, mitochondrial, found in Caenorhabditis briggsae.